The primary structure comprises 566 residues: Malate synthase, glyoxysomal (566 aa).

Arg-179 (proton acceptor) is an active-site residue. The active-site Proton donor is Asp-465. Residues Ser-564–Leu-566 carry the Microbody targeting signal motif.

This sequence belongs to the malate synthase family.

Its subcellular location is the glyoxysome. It catalyses the reaction glyoxylate + acetyl-CoA + H2O = (S)-malate + CoA + H(+). It functions in the pathway carbohydrate metabolism; glyoxylate cycle; (S)-malate from isocitrate: step 2/2. This Raphanus sativus (Radish) protein is Malate synthase, glyoxysomal (MLS).